A 202-amino-acid polypeptide reads, in one-letter code: uncharacterized protein (202 aa).

The segment at 164–202 is disordered; the sequence is DTDSEQESDQESDQDSDQESEESDQESDQDSDQDSEGSE. Residues 165–202 are compositionally biased toward acidic residues; sequence TDSEQESDQESDQDSDQESEESDQESDQDSDQDSEGSE.

This is an uncharacterized protein from Acanthamoeba polyphaga mimivirus (APMV).